Reading from the N-terminus, the 106-residue chain is Iron-sulfur cluster assembly protein CyaY (106 aa).

Belongs to the frataxin family.

Its function is as follows. Involved in iron-sulfur (Fe-S) cluster assembly. May act as a regulator of Fe-S biogenesis. This is Iron-sulfur cluster assembly protein CyaY from Klebsiella pneumoniae subsp. pneumoniae (strain ATCC 700721 / MGH 78578).